Here is a 235-residue protein sequence, read N- to C-terminus: MSNHSPNPEIIRNMFSKVAANYDKGNNVLSMGIHHLWRKKLVKYSGAKAGDQVLDCATGTGDLAIEFKKTVGTGAVTGTDFCAEMLIPAPGKAKERGLDITFEQADVTQLQYADNSFDVCSISFGIRNVGDPVKALKEMARVTRPGGKVMVLEFGQVNIPVFGALYNFYSQNILPKIGGIVTGQKEAYEYLQKSSAAFPCREGFLDLMKESGAYSKMEYITLTGGIAYIYKGTVK.

Residues T60, D80, 106-107 (DV), and S123 each bind S-adenosyl-L-methionine.

Belongs to the class I-like SAM-binding methyltransferase superfamily. MenG/UbiE family.

The enzyme catalyses a 2-demethylmenaquinol + S-adenosyl-L-methionine = a menaquinol + S-adenosyl-L-homocysteine + H(+). It carries out the reaction a 2-methoxy-6-(all-trans-polyprenyl)benzene-1,4-diol + S-adenosyl-L-methionine = a 5-methoxy-2-methyl-3-(all-trans-polyprenyl)benzene-1,4-diol + S-adenosyl-L-homocysteine + H(+). It functions in the pathway quinol/quinone metabolism; menaquinone biosynthesis; menaquinol from 1,4-dihydroxy-2-naphthoate: step 2/2. Its pathway is cofactor biosynthesis; ubiquinone biosynthesis. Its function is as follows. Methyltransferase required for the conversion of demethylmenaquinol (DMKH2) to menaquinol (MKH2) and the conversion of 2-polyprenyl-6-methoxy-1,4-benzoquinol (DDMQH2) to 2-polyprenyl-3-methyl-6-methoxy-1,4-benzoquinol (DMQH2). This chain is Ubiquinone/menaquinone biosynthesis C-methyltransferase UbiE, found in Bdellovibrio bacteriovorus (strain ATCC 15356 / DSM 50701 / NCIMB 9529 / HD100).